Consider the following 317-residue polypeptide: tRNA dimethylallyltransferase (317 aa).

G19–S26 provides a ligand contact to ATP. T21 to S26 contacts substrate. The tract at residues D44–Q47 is interaction with substrate tRNA.

It belongs to the IPP transferase family. Monomer. The cofactor is Mg(2+).

The catalysed reaction is adenosine(37) in tRNA + dimethylallyl diphosphate = N(6)-dimethylallyladenosine(37) in tRNA + diphosphate. Catalyzes the transfer of a dimethylallyl group onto the adenine at position 37 in tRNAs that read codons beginning with uridine, leading to the formation of N6-(dimethylallyl)adenosine (i(6)A). This is tRNA dimethylallyltransferase from Methylorubrum extorquens (strain CM4 / NCIMB 13688) (Methylobacterium extorquens).